A 296-amino-acid polypeptide reads, in one-letter code: NAD kinase (296 aa).

The Proton acceptor role is filled by aspartate 73. NAD(+) is bound by residues 73–74, lysine 78, 151–152, arginine 178, aspartate 180, and 191–196; these read DG, NE, and TAHAMS.

This sequence belongs to the NAD kinase family. Requires a divalent metal cation as cofactor.

Its subcellular location is the cytoplasm. It carries out the reaction NAD(+) + ATP = ADP + NADP(+) + H(+). Involved in the regulation of the intracellular balance of NAD and NADP, and is a key enzyme in the biosynthesis of NADP. Catalyzes specifically the phosphorylation on 2'-hydroxyl of the adenosine moiety of NAD to yield NADP. In Francisella tularensis subsp. holarctica (strain FTNF002-00 / FTA), this protein is NAD kinase.